Reading from the N-terminus, the 398-residue chain is MAKRVHLFDWHKEHAKKIEEFAGWEMPIWYSSIKEEHLAVRNAVGVFDVSHMGEILFKGKDALKFLQYTTTNDISKPPAISGTYTLVLNERGAIKDETLVFNMGNNEYLMICDADAFEKLYAWFTYLKKTIEQFTKLDLEIELKTYDIAMFAVQGPKARDLAMDLFGIDINEMWWFQGRWVELDGIKMLLSRSGYTGENGFEVYIEDLNPYHPDEEKRGKPEKALHVWERILEEGQKYGIKPAGLGARDTLRLEAGYTLYGNDTKELQLLSTDIDEVTPLQANLEFAIYWDKDFIGKDALLKQKEKGLGRKLVHFKMLEKSVPREGYKVYANGELIGEVTSGTLSPLLNIGIGIAFVKEEYAKPGVEIEIDIRGTRKKAITVTPPFYDPKKYGLFREE.

This sequence belongs to the GcvT family. The glycine cleavage system is composed of four proteins: P, T, L and H.

It carries out the reaction N(6)-[(R)-S(8)-aminomethyldihydrolipoyl]-L-lysyl-[protein] + (6S)-5,6,7,8-tetrahydrofolate = N(6)-[(R)-dihydrolipoyl]-L-lysyl-[protein] + (6R)-5,10-methylene-5,6,7,8-tetrahydrofolate + NH4(+). Its function is as follows. The glycine cleavage system catalyzes the degradation of glycine. The chain is Probable aminomethyltransferase from Pyrococcus furiosus (strain ATCC 43587 / DSM 3638 / JCM 8422 / Vc1).